A 250-amino-acid polypeptide reads, in one-letter code: tRNA pseudouridine synthase A (250 aa).

The active-site Nucleophile is the Asp52. Residue Tyr111 participates in substrate binding.

Belongs to the tRNA pseudouridine synthase TruA family. In terms of assembly, homodimer.

It catalyses the reaction uridine(38/39/40) in tRNA = pseudouridine(38/39/40) in tRNA. Formation of pseudouridine at positions 38, 39 and 40 in the anticodon stem and loop of transfer RNAs. This is tRNA pseudouridine synthase A from Methylobacterium sp. (strain 4-46).